Reading from the N-terminus, the 505-residue chain is Probable ribonuclease FAU-1 (505 aa).

Residues 389–408 (ISGHGSGTYDELGTPRESGD) are disordered.

The protein belongs to the FAU-1 family.

Probable RNase involved in rRNA stability through maturation and/or degradation of precursor rRNAs. Binds to RNA in loop regions with AU-rich sequences. The sequence is that of Probable ribonuclease FAU-1 from Haloquadratum walsbyi (strain DSM 16790 / HBSQ001).